The primary structure comprises 198 residues: Urease accessory protein UreE (198 aa).

Positions alanine 137 to aspartate 198 are disordered. Residues histidine 149–aspartate 198 show a composition bias toward basic and acidic residues.

It belongs to the UreE family.

Its subcellular location is the cytoplasm. Involved in urease metallocenter assembly. Binds nickel. Probably functions as a nickel donor during metallocenter assembly. The chain is Urease accessory protein UreE from Rhizobium johnstonii (strain DSM 114642 / LMG 32736 / 3841) (Rhizobium leguminosarum bv. viciae).